The primary structure comprises 166 residues: uncharacterized protein (166 aa).

This is an uncharacterized protein from Schizosaccharomyces pombe (strain 972 / ATCC 24843) (Fission yeast).